The chain runs to 338 residues: UDP-3-O-acylglucosamine N-acyltransferase (338 aa).

His243 functions as the Proton acceptor in the catalytic mechanism.

It belongs to the transferase hexapeptide repeat family. LpxD subfamily. In terms of assembly, homotrimer.

It carries out the reaction a UDP-3-O-[(3R)-3-hydroxyacyl]-alpha-D-glucosamine + a (3R)-hydroxyacyl-[ACP] = a UDP-2-N,3-O-bis[(3R)-3-hydroxyacyl]-alpha-D-glucosamine + holo-[ACP] + H(+). It participates in bacterial outer membrane biogenesis; LPS lipid A biosynthesis. Its function is as follows. Catalyzes the N-acylation of UDP-3-O-acylglucosamine using 3-hydroxyacyl-ACP as the acyl donor. Is involved in the biosynthesis of lipid A, a phosphorylated glycolipid that anchors the lipopolysaccharide to the outer membrane of the cell. The sequence is that of UDP-3-O-acylglucosamine N-acyltransferase from Amoebophilus asiaticus (strain 5a2).